Consider the following 352-residue polypeptide: Protein NDRG4 (352 aa).

A phosphoserine mark is found at Ser298, Ser317, and Ser323. Residues 314 to 323 (RTASLTSASS) are compositionally biased toward low complexity. A disordered region spans residues 314 to 352 (RTASLTSASSVDGSRPQACTHSESSEGLGQVNHTMEVSC). Positions 330–352 (QACTHSESSEGLGQVNHTMEVSC) are enriched in polar residues.

This sequence belongs to the NDRG family. In terms of processing, phosphorylated in an aortic smooth muscle cell line, following PDGF treatment. Expressed predominantly in brain and heart (at protein level). In the brain, detected in astrocytes. Isoform 1 and isoform 2 are only expressed in brain. Isoform 3 is expressed in both heart and brain. Up-regulated in glioblastoma multiforme cells.

The protein resides in the cytoplasm. Its subcellular location is the cytosol. In terms of biological role, contributes to the maintenance of intracerebral BDNF levels within the normal range, which is necessary for the preservation of spatial learning and the resistance to neuronal cell death caused by ischemic stress. May enhance growth factor-induced ERK1 and ERK2 phosphorylation, including that induced by PDGF and FGF. May attenuate NGF-promoted ELK1 phosphorylation in a microtubule-dependent manner. This Homo sapiens (Human) protein is Protein NDRG4 (NDRG4).